A 363-amino-acid chain; its full sequence is MKRTPLYERHVALGAKMVDFAGWIMPLYYSSIFEEVMAVRKSVGVFDVSHMGEIVVEGQETVDFVNFLVTNDFSAIPEGKAMYTVMCNETGGIVDDLVVYRISHEKAIMVVNAANIEKDYEWIKVHAKNFNVEVRNVSDETALVAFQGPKSQETLQRVVDIDLEGIGYYSFQWGRLDGERVLVSRTGYTGEDGFELMMNAESAAKIWDTLVEIAGNVDGKPAGLGARDVCRLEASYLLYGQDMDESTNPFEVGLSWVVKMNKDFVGKEALLKLKEKVERKLVALELSGRRIARKGYTVLKEGKEVGKITSGNFSPTLGKSIALALVSRCVKTGDRLEVVFPGKNVEAHVVKKPFYRGSVRREA.

Belongs to the GcvT family. As to quaternary structure, the glycine cleavage system is composed of four proteins: P, T, L and H.

It carries out the reaction N(6)-[(R)-S(8)-aminomethyldihydrolipoyl]-L-lysyl-[protein] + (6S)-5,6,7,8-tetrahydrofolate = N(6)-[(R)-dihydrolipoyl]-L-lysyl-[protein] + (6R)-5,10-methylene-5,6,7,8-tetrahydrofolate + NH4(+). Its function is as follows. The glycine cleavage system catalyzes the degradation of glycine. The polypeptide is Aminomethyltransferase (Thermotoga neapolitana (strain ATCC 49049 / DSM 4359 / NBRC 107923 / NS-E)).